A 328-amino-acid chain; its full sequence is Phosphate acyltransferase (328 aa).

Belongs to the PlsX family. In terms of assembly, homodimer. Probably interacts with PlsY.

The protein localises to the cytoplasm. The catalysed reaction is a fatty acyl-[ACP] + phosphate = an acyl phosphate + holo-[ACP]. The protein operates within lipid metabolism; phospholipid metabolism. Its function is as follows. Catalyzes the reversible formation of acyl-phosphate (acyl-PO(4)) from acyl-[acyl-carrier-protein] (acyl-ACP). This enzyme utilizes acyl-ACP as fatty acyl donor, but not acyl-CoA. The protein is Phosphate acyltransferase of Mycoplasma genitalium (strain ATCC 33530 / DSM 19775 / NCTC 10195 / G37) (Mycoplasmoides genitalium).